Consider the following 505-residue polypeptide: Flagellin (505 aa).

Belongs to the bacterial flagellin family.

The protein resides in the secreted. Its subcellular location is the bacterial flagellum. In terms of biological role, flagellin is the subunit protein which polymerizes to form the filaments of bacterial flagella. This chain is Flagellin (fliC), found in Salmonella moscow.